The primary structure comprises 668 residues: S-adenosyl-L-methionine-dependent tRNA 4-demethylwyosine synthase TYW1B (668 aa).

One can recognise a Flavodoxin-like domain in the interval 37 to 191 (CVQIVIEMQG…NFRAWKTKFI (155 aa)). FMN-binding positions include 43-47 (EMQGF) and 130-162 (VFGL…HRVM). The interval 202–269 (RKKSCGGHCK…QSLNSIVDVE (68 aa)) is disordered. 2 stretches are compositionally biased toward basic and acidic residues: residues 213-223 (GKCESHQHGSE) and 233-243 (DELHHRDTKEE). Positions 244–255 (EPFESSSEEEFG) are enriched in acidic residues. Residues 336–580 (LWNESHRCME…VDLIPEYEIA (245 aa)) enclose the Radical SAM core domain. Cys-352, Cys-356, and Cys-359 together coordinate [4Fe-4S] cluster.

Belongs to the TYW1 family. The cofactor is [4Fe-4S] cluster.

The catalysed reaction is N(1)-methylguanosine(37) in tRNA(Phe) + pyruvate + S-adenosyl-L-methionine = 4-demethylwyosine(37) in tRNA(Phe) + 5'-deoxyadenosine + L-methionine + CO2 + H2O. It functions in the pathway tRNA modification; wybutosine-tRNA(Phe) biosynthesis. Its function is as follows. Probable component of the wybutosine biosynthesis pathway. Wybutosine is a hyper modified guanosine with a tricyclic base found at the 3'-position adjacent to the anticodon of eukaryotic phenylalanine tRNA. Catalyzes the condensation of N-methylguanine with 2 carbon atoms from pyruvate to form the tricyclic 4-demethylwyosine, an intermediate in wybutosine biosynthesis. This Homo sapiens (Human) protein is S-adenosyl-L-methionine-dependent tRNA 4-demethylwyosine synthase TYW1B (TYW1B).